Reading from the N-terminus, the 168-residue chain is Protein SprT (168 aa).

Residues 20–166 enclose the SprT-like domain; that stretch reads EKLQQANKYL…RHCQAILQLI (147 aa). His78 serves as a coordination point for Zn(2+). Glu79 is a catalytic residue. Residue His82 coordinates Zn(2+).

This sequence belongs to the SprT family. It depends on Zn(2+) as a cofactor.

The protein localises to the cytoplasm. This Proteus mirabilis (strain HI4320) protein is Protein SprT.